A 472-amino-acid chain; its full sequence is Ribosomal protein uS12 methylthiotransferase RimO (472 aa).

The region spanning 33-143 (NRIGFVSLGC…VLKHVHKYVP (111 aa)) is the MTTase N-terminal domain. The [4Fe-4S] cluster site is built by Cys-42, Cys-78, Cys-107, Cys-175, Cys-179, and Cys-182. The 238-residue stretch at 161–398 (LTPKHYAYLK…MELQAEISAE (238 aa)) folds into the Radical SAM core domain. Positions 401-467 (ARFVGRTLDI…EHDLWAEVVD (67 aa)) constitute a TRAM domain.

Belongs to the methylthiotransferase family. RimO subfamily. Requires [4Fe-4S] cluster as cofactor.

Its subcellular location is the cytoplasm. The catalysed reaction is L-aspartate(89)-[ribosomal protein uS12]-hydrogen + (sulfur carrier)-SH + AH2 + 2 S-adenosyl-L-methionine = 3-methylsulfanyl-L-aspartate(89)-[ribosomal protein uS12]-hydrogen + (sulfur carrier)-H + 5'-deoxyadenosine + L-methionine + A + S-adenosyl-L-homocysteine + 2 H(+). Functionally, catalyzes the methylthiolation of an aspartic acid residue of ribosomal protein uS12. The polypeptide is Ribosomal protein uS12 methylthiotransferase RimO (Shewanella putrefaciens (strain CN-32 / ATCC BAA-453)).